The following is a 181-amino-acid chain: Nucleoside-triphosphatase THEP1 (181 aa).

Residues 12–19 (GPVGSIKS) and 104–111 (VIVIDEIG) each bind ATP.

It belongs to the THEP1 NTPase family.

It carries out the reaction a ribonucleoside 5'-triphosphate + H2O = a ribonucleoside 5'-diphosphate + phosphate + H(+). Functionally, has nucleotide phosphatase activity towards ATP, GTP, CTP, TTP and UTP. May hydrolyze nucleoside diphosphates with lower efficiency. This is Nucleoside-triphosphatase THEP1 from Thermoplasma acidophilum (strain ATCC 25905 / DSM 1728 / JCM 9062 / NBRC 15155 / AMRC-C165).